The primary structure comprises 206 residues: Large ribosomal subunit protein uL4 (206 aa).

Belongs to the universal ribosomal protein uL4 family. As to quaternary structure, part of the 50S ribosomal subunit.

Functionally, one of the primary rRNA binding proteins, this protein initially binds near the 5'-end of the 23S rRNA. It is important during the early stages of 50S assembly. It makes multiple contacts with different domains of the 23S rRNA in the assembled 50S subunit and ribosome. In terms of biological role, forms part of the polypeptide exit tunnel. The sequence is that of Large ribosomal subunit protein uL4 from Nitrobacter hamburgensis (strain DSM 10229 / NCIMB 13809 / X14).